We begin with the raw amino-acid sequence, 296 residues long: HTH-type transcriptional regulator GltR (296 aa).

In terms of domain architecture, HTH lysR-type spans 1 to 58 (MNIQLLQVFLTTAREGSISKAALTLNYAQSNVTNKIQQLENDLQTKLFYRHSRGITLT). The H-T-H motif DNA-binding region spans 18–37 (ISKAALTLNYAQSNVTNKIQ).

It belongs to the LysR transcriptional regulatory family.

Its function is as follows. Positive regulator of glutamate biosynthesis (gltAB genes). Negatively regulates its own expression. This is HTH-type transcriptional regulator GltR (gltR) from Bacillus subtilis (strain 168).